The sequence spans 211 residues: N-(5'-phosphoribosyl)anthranilate isomerase (211 aa).

The protein belongs to the TrpF family.

It carries out the reaction N-(5-phospho-beta-D-ribosyl)anthranilate = 1-(2-carboxyphenylamino)-1-deoxy-D-ribulose 5-phosphate. Its pathway is amino-acid biosynthesis; L-tryptophan biosynthesis; L-tryptophan from chorismate: step 3/5. The polypeptide is N-(5'-phosphoribosyl)anthranilate isomerase (Pseudomonas aeruginosa (strain LESB58)).